Consider the following 370-residue polypeptide: Caffeic acid 3-O-methyltransferase (370 aa).

A propeptide spanning residues 1–2 (MG) is cleaved from the precursor. Residue 135–141 (MNQDKVL) coordinates substrate. Positions 167–185 (AFEYHGTDPRFNKVFNRGM) are substrate binding. 5 residues coordinate S-adenosyl-L-methionine: G213, D236, D256, M257, and K270. The active-site Proton acceptor is the H274.

This sequence belongs to the class I-like SAM-binding methyltransferase superfamily. Cation-independent O-methyltransferase family. COMT subfamily. As to quaternary structure, homodimer.

It catalyses the reaction (E)-caffeate + S-adenosyl-L-methionine = (E)-ferulate + S-adenosyl-L-homocysteine + H(+). It functions in the pathway aromatic compound metabolism; phenylpropanoid biosynthesis. Catalyzes the conversion of caffeic acid to ferulic acid and of 5-hydroxyferulic acid to sinapic acid. The resulting products may subsequently be converted to the corresponding alcohols that are incorporated into lignins. The sequence is that of Caffeic acid 3-O-methyltransferase (COMT) from Clarkia breweri (Fairy fans).